A 665-amino-acid chain; its full sequence is DNA ligase (665 aa).

NAD(+) is bound by residues 31 to 35 (DKEFD), 80 to 81 (SL), and glutamate 110. Residue lysine 112 is the N6-AMP-lysine intermediate of the active site. NAD(+) contacts are provided by arginine 133, glutamate 170, lysine 285, and lysine 309. Residues cysteine 403, cysteine 406, cysteine 421, and cysteine 427 each coordinate Zn(2+). The BRCT domain maps to 587-665 (GHTDKLAGQS…NEEEFLKLIS (79 aa)).

The protein belongs to the NAD-dependent DNA ligase family. LigA subfamily. Requires Mg(2+) as cofactor. The cofactor is Mn(2+).

The enzyme catalyses NAD(+) + (deoxyribonucleotide)n-3'-hydroxyl + 5'-phospho-(deoxyribonucleotide)m = (deoxyribonucleotide)n+m + AMP + beta-nicotinamide D-nucleotide.. Functionally, DNA ligase that catalyzes the formation of phosphodiester linkages between 5'-phosphoryl and 3'-hydroxyl groups in double-stranded DNA using NAD as a coenzyme and as the energy source for the reaction. It is essential for DNA replication and repair of damaged DNA. The protein is DNA ligase of Bacteroides fragilis (strain ATCC 25285 / DSM 2151 / CCUG 4856 / JCM 11019 / LMG 10263 / NCTC 9343 / Onslow / VPI 2553 / EN-2).